A 164-amino-acid polypeptide reads, in one-letter code: Large ribosomal subunit protein uL15 (164 aa).

The span at 1-14 shows a compositional bias: polar residues; sequence MKLNEIQDNPGSSK. The interval 1–35 is disordered; it reads MKLNEIQDNPGSSKSRMRVGRGIGSGKGKTCGRGV. Residues 21–35 show a composition bias toward gly residues; it reads RGIGSGKGKTCGRGV.

It belongs to the universal ribosomal protein uL15 family. Part of the 50S ribosomal subunit.

Binds to the 23S rRNA. The polypeptide is Large ribosomal subunit protein uL15 (Methylocella silvestris (strain DSM 15510 / CIP 108128 / LMG 27833 / NCIMB 13906 / BL2)).